We begin with the raw amino-acid sequence, 327 residues long: GMP reductase (327 aa).

The active-site Thioimidate intermediate is C175. 204 to 227 (IIADGGIRTNGDVAKSIRFGATMV) serves as a coordination point for NADP(+).

Belongs to the IMPDH/GMPR family. GuaC type 2 subfamily.

The enzyme catalyses IMP + NH4(+) + NADP(+) = GMP + NADPH + 2 H(+). Functionally, catalyzes the irreversible NADPH-dependent deamination of GMP to IMP. It functions in the conversion of nucleobase, nucleoside and nucleotide derivatives of G to A nucleotides, and in maintaining the intracellular balance of A and G nucleotides. The protein is GMP reductase of Bacillus cereus (strain ZK / E33L).